Reading from the N-terminus, the 975-residue chain is Glycine dehydrogenase (decarboxylating) (975 aa).

K702 carries the N6-(pyridoxal phosphate)lysine modification.

It belongs to the GcvP family. In terms of assembly, the glycine cleavage system is composed of four proteins: P, T, L and H. Pyridoxal 5'-phosphate is required as a cofactor.

The enzyme catalyses N(6)-[(R)-lipoyl]-L-lysyl-[glycine-cleavage complex H protein] + glycine + H(+) = N(6)-[(R)-S(8)-aminomethyldihydrolipoyl]-L-lysyl-[glycine-cleavage complex H protein] + CO2. Functionally, the glycine cleavage system catalyzes the degradation of glycine. The P protein binds the alpha-amino group of glycine through its pyridoxal phosphate cofactor; CO(2) is released and the remaining methylamine moiety is then transferred to the lipoamide cofactor of the H protein. This is Glycine dehydrogenase (decarboxylating) from Xanthomonas campestris pv. campestris (strain 8004).